A 123-amino-acid polypeptide reads, in one-letter code: Protein Wnt-7a (123 aa).

Ser-1 carries O-palmitoleoyl serine; by PORCN lipidation. Residues 33-61 (VEPVRASRNKRPTFLKIKKPLSYRKPMDT) are disordered linker. The cysteines at positions 89 and 104 are disulfide-linked. A glycan (N-linked (GlcNAc...) asparagine) is linked at Asn-90.

It belongs to the Wnt family. As to quaternary structure, forms a soluble 1:1 complex with AFM; this prevents oligomerization and is required for prolonged biological activity. The complex with AFM may represent the physiological form in body fluids. Interacts with FZD5. Interacts with PORCN. In terms of processing, palmitoleoylation is required for efficient binding to frizzled receptors. Depalmitoleoylation leads to Wnt signaling pathway inhibition.

The protein resides in the secreted. Its subcellular location is the extracellular space. The protein localises to the extracellular matrix. Its function is as follows. Ligand for members of the frizzled family of seven transmembrane receptors that functions in the canonical Wnt/beta-catenin signaling pathway. Plays an important role in embryonic development, including dorsal versus ventral patterning during limb development, skeleton development and urogenital tract development. Required for central nervous system (CNS) angiogenesis and blood-brain barrier regulation. In Meleagris gallopavo (Wild turkey), this protein is Protein Wnt-7a (WNT7A).